Reading from the N-terminus, the 63-residue chain is uncharacterized protein (63 aa).

A compositionally biased stretch (basic and acidic residues) spans 1-17 (MRYTDSRKLTPETDANH). The tract at residues 1 to 32 (MRYTDSRKLTPETDANHKTASPQPIRRISSQT) is disordered. Polar residues predominate over residues 18 to 32 (KTASPQPIRRISSQT).

The protein to Y.enterocolitica HemP.

This is an uncharacterized protein from Escherichia coli (strain K12).